The following is a 327-amino-acid chain: Delta(6)-protoilludene synthase HYPSUDRAFT_138665 (327 aa).

4 residues coordinate Mg(2+): aspartate 79, asparagine 215, serine 219, and glutamate 223. The DDXXD motif signature appears at 79-83 (DEHTD). (2E,6E)-farnesyl diphosphate-binding residues include arginine 304 and tyrosine 305.

Belongs to the terpene synthase family. Mg(2+) is required as a cofactor.

The catalysed reaction is (2E,6E)-farnesyl diphosphate = Delta(6)-protoilludene + diphosphate. Terpene cyclase that catalyzes the cyclization of farnesyl diphosphate (FPP) to delta(6)-protoilludene. The polypeptide is Delta(6)-protoilludene synthase HYPSUDRAFT_138665 (Hypholoma sublateritium (strain FD-334 SS-4)).